Consider the following 458-residue polypeptide: Exodeoxyribonuclease 7 large subunit (458 aa).

Belongs to the XseA family. Heterooligomer composed of large and small subunits.

It localises to the cytoplasm. The catalysed reaction is Exonucleolytic cleavage in either 5'- to 3'- or 3'- to 5'-direction to yield nucleoside 5'-phosphates.. Functionally, bidirectionally degrades single-stranded DNA into large acid-insoluble oligonucleotides, which are then degraded further into small acid-soluble oligonucleotides. The chain is Exodeoxyribonuclease 7 large subunit from Escherichia coli O17:K52:H18 (strain UMN026 / ExPEC).